The primary structure comprises 168 residues: Auxin-responsive protein IAA1 (168 aa).

Residues 1–74 form a disordered region; it reads MEVTNGLNLK…NRKNNNNKNV (74 aa). The short motif at 14–18 is the EAR-like (transcriptional repression) element; that stretch reads LRLGL. The span at 23-34 shows a compositional bias: polar residues; it reads EEQQLELSCVRS. One can recognise a PB1 domain in the interval 74 to 161; sequence VSYVKVSMDG…SCQKLRIMKG (88 aa).

This sequence belongs to the Aux/IAA family. Homodimers and heterodimers. Interacts with the auxin-responsive protein IAA2. Interacts with TPL. Phosphorylated by phytochrome A in vitro. Preferentially expressed in stems, leaves and flowers.

Its subcellular location is the nucleus. In terms of biological role, aux/IAA proteins are short-lived transcriptional factors that function as repressors of early auxin response genes at low auxin concentrations. Repression is thought to result from the interaction with auxin response factors (ARFs), proteins that bind to the auxin-responsive promoter element (AuxRE). Formation of heterodimers with ARF proteins may alter their ability to modulate early auxin response genes expression. In Arabidopsis thaliana (Mouse-ear cress), this protein is Auxin-responsive protein IAA1 (IAA1).